Reading from the N-terminus, the 215-residue chain is MSDNAQLSGLCDRFRGFYPVVIDVETAGFNAKTDALLEIAAITLKMDEQGWLMPDTTLHFHVEPFAGANLQPEALAFNGIDPSNPLRGAVSEYEALHAIFKMVRKGIKDSGCSRAIMVAHNATFDHSFMMAAAERASLKRNPFHPFVTFDTAALSGLALGQTVLSKACLAAGMEFDGEKAHSALYDTERTAVLFCEIVNRWKRLGGWPLPLPTDK.

Residues 20 to 194 enclose the Exonuclease domain; that stretch reads VVIDVETAGF…YDTERTAVLF (175 aa). 4 residues coordinate Mg(2+): Asp-23, Glu-25, His-181, and Asp-186. Catalysis depends on His-181, which acts as the Proton donor/acceptor.

It belongs to the RNase T family. In terms of assembly, homodimer. Mg(2+) is required as a cofactor.

Its function is as follows. Trims short 3' overhangs of a variety of RNA species, leaving a one or two nucleotide 3' overhang. Responsible for the end-turnover of tRNA: specifically removes the terminal AMP residue from uncharged tRNA (tRNA-C-C-A). Also appears to be involved in tRNA biosynthesis. The protein is Ribonuclease T of Salmonella choleraesuis (strain SC-B67).